The chain runs to 81 residues: Cytotoxin 2 (81 aa).

The N-terminal stretch at 1 to 21 is a signal peptide; that stretch reads MKTLLLTLVVVTIVCLDLGYT. Disulfide bonds link Cys-24–Cys-42, Cys-35–Cys-59, Cys-63–Cys-74, and Cys-75–Cys-80.

The protein belongs to the three-finger toxin family. Short-chain subfamily. Type IA cytotoxin sub-subfamily. Monomer in solution; Homodimer and oligomer in the presence of negatively charged lipids forming a pore with a size ranging between 20 and 30 Angstroms. As to expression, expressed by the venom gland.

Its subcellular location is the secreted. The protein localises to the target cell membrane. Its function is as follows. Basic protein that binds to cell membrane and depolarizes cardiomyocytes. It also shows lytic activities, but 2-fold less important than that of CTX-A4. It binds to the integrin alpha-V/beta-3 (ITGAV/ITGB3) with a moderate affinity. It may interact with sulfatides in the cell membrane which induces pore formation and cell internalization and is responsible for cytotoxicity in cardiomyocytes. It may also target the mitochondrial membrane and induce mitochondrial swelling and fragmentation. The sequence is that of Cytotoxin 2 from Naja atra (Chinese cobra).